The following is a 330-amino-acid chain: Aspartate--ammonia ligase (330 aa).

It belongs to the class-II aminoacyl-tRNA synthetase family. AsnA subfamily.

The protein resides in the cytoplasm. It carries out the reaction L-aspartate + NH4(+) + ATP = L-asparagine + AMP + diphosphate + H(+). Its pathway is amino-acid biosynthesis; L-asparagine biosynthesis; L-asparagine from L-aspartate (ammonia route): step 1/1. This Escherichia coli O81 (strain ED1a) protein is Aspartate--ammonia ligase.